The chain runs to 172 residues: S-ribosylhomocysteine lyase (172 aa).

Residues His-54, His-58, and Cys-128 each coordinate Fe cation.

This sequence belongs to the LuxS family. In terms of assembly, homodimer. Fe cation serves as cofactor.

The catalysed reaction is S-(5-deoxy-D-ribos-5-yl)-L-homocysteine = (S)-4,5-dihydroxypentane-2,3-dione + L-homocysteine. Its function is as follows. Involved in the synthesis of autoinducer 2 (AI-2) which is secreted by bacteria and is used to communicate both the cell density and the metabolic potential of the environment. The regulation of gene expression in response to changes in cell density is called quorum sensing. Catalyzes the transformation of S-ribosylhomocysteine (RHC) to homocysteine (HC) and 4,5-dihydroxy-2,3-pentadione (DPD). This is S-ribosylhomocysteine lyase from Vibrio alginolyticus.